The primary structure comprises 2588 residues: uncharacterized protein (2588 aa).

Basic and acidic residues predominate over residues 1-11 (MSFKNNEKYMD). Disordered stretches follow at residues 1 to 56 (MSFK…NISN), 442 to 598 (ELES…HFSN), 774 to 801 (KKEK…NNNI), 1303 to 1357 (DSHD…KKKY), 1631 to 1662 (QNSN…HHQN), 1685 to 1705 (NNNN…KDQP), 1820 to 1856 (KLNV…EEND), 2317 to 2342 (KKKK…DNIN), and 2415 to 2437 (YDNN…NSHT). Residues 42–56 (NNNNNNNNNNSNISN) show a composition bias toward low complexity. Positions 413–452 (YREIEENEKVMEMQRRENELLEEKKRLKQELESYHDDSST) form a coiled coil. Residues 451–462 (STDDDSSADEQQ) are compositionally biased toward acidic residues. 2 stretches are compositionally biased toward basic and acidic residues: residues 463 to 515 (DERR…KNDD) and 522 to 588 (DHTH…DHTH). The span at 785 to 801 (DNNNNNNNNNNNDNNNI) shows a compositional bias: low complexity. Positions 1308-1318 (NNDDSVNDSND) are enriched in acidic residues. Low complexity predominate over residues 1319-1331 (DTNNVNVNVNVND). Basic residues predominate over residues 1347–1356 (DKKKKHKKKK). Residues 1631–1643 (QNSNNKSNDSLKM) show a composition bias toward polar residues. Positions 1685–1698 (NNNNNNNNNNNNND) are enriched in low complexity. The segment covering 1828 to 1838 (QGERQDERNID) has biased composition (basic and acidic residues). Residues 1839-1856 (HEDEPVSSNTEDDHEEND) are compositionally biased toward acidic residues. The segment covering 2416 to 2434 (DNNNNNDNNNDNNNDNNNN) has biased composition (low complexity).

This is an uncharacterized protein from Plasmodium falciparum (isolate 3D7).